Consider the following 180-residue polypeptide: MTLKQLVTGCYTILRSIWMIGMQAFNKRETQMYPDIPIYQTSRFRGRIVLTCDPDGYERCVACNLCAVACPVDCISLQKTESKEGRWYPEFFRINFSRCIFCGLCEEACPTTAIQLTPDFEMAEFKRQDLVYEKEDLLIRGPGKYPEYNFYRMAGIACNDKLKGHAENETRPINVKDLLP.

2 4Fe-4S ferredoxin-type domains span residues G46–T80 and E90–D119. C60, C63, C66, C70, C99, C102, C105, and C109 together coordinate [4Fe-4S] cluster.

It belongs to the complex I 23 kDa subunit family. As to quaternary structure, NDH-1 is composed of 14 different subunits. Subunits NuoA, H, J, K, L, M, N constitute the membrane sector of the complex. Requires [4Fe-4S] cluster as cofactor.

It localises to the cell membrane. It catalyses the reaction a quinone + NADH + 5 H(+)(in) = a quinol + NAD(+) + 4 H(+)(out). Functionally, NDH-1 shuttles electrons from NADH, via FMN and iron-sulfur (Fe-S) centers, to quinones in the respiratory chain. The immediate electron acceptor for the enzyme in this species is believed to be ubiquinone. Couples the redox reaction to proton translocation (for every two electrons transferred, four hydrogen ions are translocated across the cytoplasmic membrane), and thus conserves the redox energy in a proton gradient. The protein is NADH-quinone oxidoreductase subunit I of Baumannia cicadellinicola subsp. Homalodisca coagulata.